The primary structure comprises 485 residues: Aspartyl/glutamyl-tRNA(Asn/Gln) amidotransferase subunit B (485 aa).

It belongs to the GatB/GatE family. GatB subfamily. As to quaternary structure, heterotrimer of A, B and C subunits.

The catalysed reaction is L-glutamyl-tRNA(Gln) + L-glutamine + ATP + H2O = L-glutaminyl-tRNA(Gln) + L-glutamate + ADP + phosphate + H(+). The enzyme catalyses L-aspartyl-tRNA(Asn) + L-glutamine + ATP + H2O = L-asparaginyl-tRNA(Asn) + L-glutamate + ADP + phosphate + 2 H(+). Allows the formation of correctly charged Asn-tRNA(Asn) or Gln-tRNA(Gln) through the transamidation of misacylated Asp-tRNA(Asn) or Glu-tRNA(Gln) in organisms which lack either or both of asparaginyl-tRNA or glutaminyl-tRNA synthetases. The reaction takes place in the presence of glutamine and ATP through an activated phospho-Asp-tRNA(Asn) or phospho-Glu-tRNA(Gln). This Paramagnetospirillum magneticum (strain ATCC 700264 / AMB-1) (Magnetospirillum magneticum) protein is Aspartyl/glutamyl-tRNA(Asn/Gln) amidotransferase subunit B.